The sequence spans 180 residues: Large ribosomal subunit protein uL5 (180 aa).

The protein belongs to the universal ribosomal protein uL5 family. Part of the 50S ribosomal subunit; part of the 5S rRNA/L5/L18/L25 subcomplex. Contacts the 5S rRNA and the P site tRNA. Forms a bridge to the 30S subunit in the 70S ribosome.

In terms of biological role, this is one of the proteins that bind and probably mediate the attachment of the 5S RNA into the large ribosomal subunit, where it forms part of the central protuberance. In the 70S ribosome it contacts protein S13 of the 30S subunit (bridge B1b), connecting the 2 subunits; this bridge is implicated in subunit movement. Contacts the P site tRNA; the 5S rRNA and some of its associated proteins might help stabilize positioning of ribosome-bound tRNAs. This chain is Large ribosomal subunit protein uL5, found in Streptococcus thermophilus (strain ATCC BAA-491 / LMD-9).